We begin with the raw amino-acid sequence, 227 residues long: Claudin-15 (227 aa).

A topological domain (cytoplasmic) is located at residue M1. The helical transmembrane segment at 2–24 (SIAVETFGFFMSALGLLMLGVTL) threads the bilayer. Over 25–74 (PNSYWRVSTVHGNVITTNTIFENLWYSCATDSLGVSNCWDFPSMLALSGY) the chain is Extracellular. A disulfide bond links C52 and C62. Residues 75-99 (VQGCRALMITAILLGFLGLFLGMVG) traverse the membrane as a helical segment. Residues 100 to 115 (LRCTNVGNIDLSRKAK) lie on the Cytoplasmic side of the membrane. S111 bears the Phosphoserine mark. A helical membrane pass occupies residues 116-140 (LLAIAGAFHILAGACGMVAISWYAV). The Extracellular segment spans residues 141–159 (NITTDFFNPLYVGTKYELG). Residues 146 to 147 (FF) form an important for the formation of tight-junction strand-like structures region. The helical transmembrane segment at 160–182 (SALYLGWSASLLSILGGICVFST) threads the bilayer. The Cytoplasmic portion of the chain corresponds to 183–227 (CCCDSKEDPATRVGLPYKPSTVVTARATSDESDVSFGKYGKNAYV). Phosphoserine occurs at positions 211, 214, and 217.

It belongs to the claudin family. As to quaternary structure, can form homo- and heteropolymeric tight junction strands. In terms of processing, palmitoylated. As to expression, detected in kidney, jejunum and colon (at protein level).

The protein resides in the cell junction. Its subcellular location is the tight junction. It localises to the cell membrane. The catalysed reaction is Na(+)(in) = Na(+)(out). It catalyses the reaction K(+)(in) = K(+)(out). It carries out the reaction Cs(+)(in) = Cs(+)(out). The enzyme catalyses Rb(+)(in) = Rb(+)(out). The catalysed reaction is Li(+)(in) = Li(+)(out). It catalyses the reaction NH4(+)(in) = NH4(+)(out). It carries out the reaction methylamine(out) = methylamine(in). The enzyme catalyses H2O(in) = H2O(out). Its function is as follows. Forms paracellular channels: polymerizes in tight junction strands with cation- and water-selective channels through the strands, conveying epithelial permeability in a process known as paracellular tight junction permeability. In intestinal epithelium, allows for sodium and water fluxes from the peritoneal side to the lumen of the intestine to regulate nutrient absorption and intestinal morphogenesis. In Rattus norvegicus (Rat), this protein is Claudin-15.